Here is a 338-residue protein sequence, read N- to C-terminus: Ribosomal RNA small subunit methyltransferase C (338 aa).

Belongs to the methyltransferase superfamily. RsmC family. As to quaternary structure, monomer.

It localises to the cytoplasm. The catalysed reaction is guanosine(1207) in 16S rRNA + S-adenosyl-L-methionine = N(2)-methylguanosine(1207) in 16S rRNA + S-adenosyl-L-homocysteine + H(+). Specifically methylates the guanine in position 1207 of 16S rRNA in the 30S particle. This is Ribosomal RNA small subunit methyltransferase C from Acinetobacter baylyi (strain ATCC 33305 / BD413 / ADP1).